A 263-amino-acid chain; its full sequence is MAPK-interacting and spindle-stabilizing protein (263 aa).

The interval 13–238 is disordered; the sequence is GSPAPFLPSG…LGKQQGHNTT (226 aa). 2 stretches are compositionally biased toward pro residues: residues 14 to 34 and 140 to 155; these read SPAP…PYPG and GLQP…PPGP. Over residues 156–165 the composition is skewed to low complexity; the sequence is SAASPGPGSL. Polar residues predominate over residues 176–189; sequence PSDSSNPESTLEST. Residues 202–213 show a composition bias toward basic residues; it reads IKRRRSKKKSKR.

Belongs to the MISS family. Interacts with MAPK1. Post-translationally, phosphorylated in vitro by MAPK1.

The protein localises to the cytoplasm. The protein resides in the cytoskeleton. It is found in the spindle. Involved in the maintenance of the spindle integrity during the cytostatic factor (CSF) arrest of oocytes. The protein is MAPK-interacting and spindle-stabilizing protein (Mapk1ip1) of Mus musculus (Mouse).